We begin with the raw amino-acid sequence, 144 residues long: Transcription antitermination protein NusB (144 aa).

Belongs to the NusB family.

In terms of biological role, involved in transcription antitermination. Required for transcription of ribosomal RNA (rRNA) genes. Binds specifically to the boxA antiterminator sequence of the ribosomal RNA (rrn) operons. This chain is Transcription antitermination protein NusB, found in Paraburkholderia xenovorans (strain LB400).